Reading from the N-terminus, the 167-residue chain is Small ribosomal subunit protein uS5 (167 aa).

Residues 12-75 (LQEKLITVNR…EQARRNMITI (64 aa)) enclose the S5 DRBM domain.

Belongs to the universal ribosomal protein uS5 family. In terms of assembly, part of the 30S ribosomal subunit. Contacts proteins S4 and S8.

In terms of biological role, with S4 and S12 plays an important role in translational accuracy. Its function is as follows. Located at the back of the 30S subunit body where it stabilizes the conformation of the head with respect to the body. The protein is Small ribosomal subunit protein uS5 of Buchnera aphidicola subsp. Acyrthosiphon pisum (strain APS) (Acyrthosiphon pisum symbiotic bacterium).